The following is a 172-amino-acid chain: Large ribosomal subunit protein uL10 (172 aa).

Belongs to the universal ribosomal protein uL10 family. Part of the ribosomal stalk of the 50S ribosomal subunit. The N-terminus interacts with L11 and the large rRNA to form the base of the stalk. The C-terminus forms an elongated spine to which L12 dimers bind in a sequential fashion forming a multimeric L10(L12)X complex.

Forms part of the ribosomal stalk, playing a central role in the interaction of the ribosome with GTP-bound translation factors. This Chlorobium luteolum (strain DSM 273 / BCRC 81028 / 2530) (Pelodictyon luteolum) protein is Large ribosomal subunit protein uL10.